Here is a 586-residue protein sequence, read N- to C-terminus: Urease subunit alpha (586 aa).

Positions 134–586 (GAIDTHIHFI…LPMAQRYFLF (453 aa)) constitute a Urease domain. Ni(2+) is bound by residues histidine 139, histidine 141, and lysine 222. N6-carboxylysine is present on lysine 222. Histidine 224 serves as a coordination point for substrate. The Ni(2+) site is built by histidine 251 and histidine 277. Histidine 325 acts as the Proton donor in catalysis. Position 365 (aspartate 365) interacts with Ni(2+).

This sequence belongs to the metallo-dependent hydrolases superfamily. Urease alpha subunit family. In terms of assembly, heterotrimer of UreA (gamma), UreB (beta) and UreC (alpha) subunits. Three heterotrimers associate to form the active enzyme. Ni cation is required as a cofactor. In terms of processing, carboxylation allows a single lysine to coordinate two nickel ions.

The protein resides in the cytoplasm. The catalysed reaction is urea + 2 H2O + H(+) = hydrogencarbonate + 2 NH4(+). The protein operates within nitrogen metabolism; urea degradation; CO(2) and NH(3) from urea (urease route): step 1/1. This Gloeothece citriformis (strain PCC 7424) (Cyanothece sp. (strain PCC 7424)) protein is Urease subunit alpha.